The primary structure comprises 491 residues: Glucose-6-phosphate 1-dehydrogenase (491 aa).

NADP(+)-binding residues include R51 and K150. H180, K184, E218, and D237 together coordinate substrate. The active-site Proton acceptor is H242. K341 is a binding site for substrate.

Belongs to the glucose-6-phosphate dehydrogenase family.

It carries out the reaction D-glucose 6-phosphate + NADP(+) = 6-phospho-D-glucono-1,5-lactone + NADPH + H(+). It participates in carbohydrate degradation; pentose phosphate pathway; D-ribulose 5-phosphate from D-glucose 6-phosphate (oxidative stage): step 1/3. Functionally, catalyzes the oxidation of glucose 6-phosphate to 6-phosphogluconolactone. This chain is Glucose-6-phosphate 1-dehydrogenase, found in Rhizobium meliloti (strain 1021) (Ensifer meliloti).